The chain runs to 152 residues: Gamma-glutamylaminecyclotransferase C (152 aa).

A substrate-binding site is contributed by 9-12; that stretch reads YGSL. The Proton acceptor role is filled by glutamate 84.

Belongs to the gamma-glutamylcyclotransferase family.

It carries out the reaction epsilon-(gamma-L-glutamyl)-L-lysine = 5-oxo-L-proline + L-lysine. Its function is as follows. May contribute to degradation of proteins cross-linked by transglutaminases by degrading the cross-link between a lysine and a glutamic acid residue. Catalyzes the formation of 5-oxo-L-proline from L-gamma-glutamyl-L-epsilon-lysine. This chain is Gamma-glutamylaminecyclotransferase C (ggact.3), found in Danio rerio (Zebrafish).